A 624-amino-acid chain; its full sequence is 1-deoxy-D-xylulose-5-phosphate synthase (624 aa).

Thiamine diphosphate-binding positions include His-80 and 121-123 (GHS). Asp-152 is a Mg(2+) binding site. Residues 153–154 (GA), Asn-181, Tyr-289, and Glu-371 each bind thiamine diphosphate. Asn-181 is a Mg(2+) binding site.

This sequence belongs to the transketolase family. DXPS subfamily. In terms of assembly, homodimer. Mg(2+) is required as a cofactor. The cofactor is thiamine diphosphate.

The catalysed reaction is D-glyceraldehyde 3-phosphate + pyruvate + H(+) = 1-deoxy-D-xylulose 5-phosphate + CO2. It functions in the pathway metabolic intermediate biosynthesis; 1-deoxy-D-xylulose 5-phosphate biosynthesis; 1-deoxy-D-xylulose 5-phosphate from D-glyceraldehyde 3-phosphate and pyruvate: step 1/1. In terms of biological role, catalyzes the acyloin condensation reaction between C atoms 2 and 3 of pyruvate and glyceraldehyde 3-phosphate to yield 1-deoxy-D-xylulose-5-phosphate (DXP). This Blochmanniella pennsylvanica (strain BPEN) protein is 1-deoxy-D-xylulose-5-phosphate synthase.